Reading from the N-terminus, the 94-residue chain is Co-chaperonin GroES (94 aa).

This sequence belongs to the GroES chaperonin family. In terms of assembly, heptamer of 7 subunits arranged in a ring. Interacts with the chaperonin GroEL.

It localises to the cytoplasm. Its function is as follows. Together with the chaperonin GroEL, plays an essential role in assisting protein folding. The GroEL-GroES system forms a nano-cage that allows encapsulation of the non-native substrate proteins and provides a physical environment optimized to promote and accelerate protein folding. GroES binds to the apical surface of the GroEL ring, thereby capping the opening of the GroEL channel. The chain is Co-chaperonin GroES from Clostridium perfringens (strain SM101 / Type A).